The following is a 465-amino-acid chain: Mothers against decapentaplegic homolog 5 (465 aa).

Thr2 bears the N-acetylthreonine mark. The 125-residue stretch at 13–137 (PAVKRLLGWK…YKRVESPVLP (125 aa)) folds into the MH1 domain. Positions 65, 110, 122, and 127 each coordinate Zn(2+). Residues 163–243 (NEPHMPQNAT…GQDNSQPMDT (81 aa)) form a disordered region. The segment covering 169–182 (QNATFPDSFHQPNS) has biased composition (polar residues). The span at 186–197 (PLSPNSPYPPSP) shows a compositional bias: pro residues. Residues 198-214 (ASSTYPNSPASSGPGSP) show a composition bias toward low complexity. The segment covering 234–243 (GQDNSQPMDT) has biased composition (polar residues). The region spanning 271 to 465 (WCSIVYYELN…SPLNPISSVS (195 aa)) is the MH2 domain. Ser463 and Ser465 each carry phosphoserine.

The protein belongs to the dwarfin/SMAD family. As to quaternary structure, homodimer. Forms trimers with the co-SMAD SMAD4. Interacts with PEBP2-alpha subunit and SMURF1. Interacts with SUV39H1 and SUV39H2. Interacts (via MH2 domain) with LEMD3. Interacts with WWP1. Interacts with TMEM119. Interacts with ZNF8. Interacts with RANBP3L. Interacts with HK1. Interacts with HGS; this interaction attenuates BMP signaling. In terms of processing, phosphorylated on serine by BMP (bone morphogenetic proteins) type 1 receptor kinase. Post-translationally, ubiquitin-mediated proteolysis by SMAD-specific E3 ubiquitin ligase SMURF1.

The protein resides in the cytoplasm. The protein localises to the nucleus. It is found in the mitochondrion. Its function is as follows. Transcriptional regulator that plays a role in various cellular processes including embryonic development, cell differentiation, angiogenesis and tissue homeostasis. Upon BMP ligand binding to their receptors at the cell surface, is phosphorylated by activated type I BMP receptors (BMPRIs) and associates with SMAD4 to form a heteromeric complex which translocates into the nucleus acting as transcription factor. In turn, the hetero-trimeric complex recognizes cis-regulatory elements containing Smad Binding Elements (SBEs) to modulate the outcome of the signaling network. Non-phosphorylated SMAD5 has a cytoplasmic role in energy metabolism regulation by promoting mitochondrial respiration and glycolysis in response to cytoplasmic pH changes. Mechanistically, interacts with hexokinase 1/HK1 and thereby accelerates glycolysis. The chain is Mothers against decapentaplegic homolog 5 (Smad5) from Rattus norvegicus (Rat).